The sequence spans 392 residues: 4-hydroxybenzoate polyprenyltransferase, mitochondrial (392 aa).

The N-terminal 22 residues, 1–22 (MYALRHLRLQSARHFRSSYAAA), are a transit peptide targeting the mitochondrion. 9 consecutive transmembrane segments (helical) span residues 90-110 (IGTY…ADAG), 115-135 (LTML…GCTI), 163-183 (FDAI…LVQL), 184-204 (NWQS…YPLM), 207-227 (VTYW…LLGW), 236-256 (LAAC…YDTI), 283-303 (VWLS…GWAC), 307-327 (VPYY…IYSL), and 339-359 (FISN…GTLL). The segment at 365-392 (KKQRQSSLTTSTASSYVPALPQKPEVLS) is disordered. Over residues 369 to 379 (QSSLTTSTASS) the composition is skewed to polar residues.

It belongs to the UbiA prenyltransferase family. It depends on Mg(2+) as a cofactor.

It localises to the mitochondrion inner membrane. It catalyses the reaction an all-trans-polyprenyl diphosphate + 4-hydroxybenzoate = a 4-hydroxy-3-(all-trans-polyprenyl)benzoate + diphosphate. It participates in cofactor biosynthesis; ubiquinone biosynthesis. Its function is as follows. Catalyzes the prenylation of para-hydroxybenzoate (PHB) with an all-trans polyprenyl group. Mediates the second step in the final reaction sequence of coenzyme Q (CoQ) biosynthesis, which is the condensation of the polyisoprenoid side chain with PHB, generating the first membrane-bound Q intermediate. The sequence is that of 4-hydroxybenzoate polyprenyltransferase, mitochondrial from Drosophila melanogaster (Fruit fly).